Here is a 273-residue protein sequence, read N- to C-terminus: Neuferricin (273 aa).

A signal peptide spans 1-22; that stretch reads MLGYLAAAALCLAAVLLMRLDH. The 100-residue stretch at 44–143 folds into the Cytochrome b5 heme-binding domain; that stretch reads GRLMSKEELS…QNYITIGKLT (100 aa).

This sequence belongs to the cytochrome b5 family. MAPR subfamily.

The protein resides in the secreted. In terms of biological role, heme-binding protein which promotes neuronal but not astrocyte differentiation. The polypeptide is Neuferricin (cyb5d2) (Xenopus tropicalis (Western clawed frog)).